Consider the following 156-residue polypeptide: Arginine repressor (156 aa).

Belongs to the ArgR family.

It localises to the cytoplasm. Its pathway is amino-acid biosynthesis; L-arginine biosynthesis [regulation]. In terms of biological role, regulates arginine biosynthesis genes. This chain is Arginine repressor, found in Edwardsiella ictaluri (strain 93-146).